Here is a 519-residue protein sequence, read N- to C-terminus: Probable FAD synthase (519 aa).

A molybdenum cofactor biosynthesis protein-like region spans residues 17 to 108 (AILVIGDEIL…TDQMQFSDEI (92 aa)). The tract at residues 328-485 (QIALSFNGGK…SLGGRDNTVK (158 aa)) is FAD synthase.

In the N-terminal section; belongs to the MoaB/Mog family. It in the C-terminal section; belongs to the PAPS reductase family. FAD1 subfamily. The cofactor is Mg(2+).

It carries out the reaction FMN + ATP + H(+) = FAD + diphosphate. Its pathway is cofactor biosynthesis; FAD biosynthesis; FAD from FMN: step 1/1. Functionally, catalyzes the adenylation of flavin mononucleotide (FMN) to form flavin adenine dinucleotide (FAD) coenzyme. In Caenorhabditis elegans, this protein is Probable FAD synthase.